A 956-amino-acid polypeptide reads, in one-letter code: Translation initiation factor IF-2 (956 aa).

Disordered regions lie at residues 53–102 (QFAG…QQEI), 116–315 (GKID…NRPA), and 334–371 (TLEKLQGKGGKSKAAKYRRDKRETHRQKSDDEQRALDE). Positions 58-102 (KGNKEASKEVGEEKRKEKEALRVEREKEIEDKRRQEEERQKQQEI) are enriched in basic and acidic residues. Residues 142 to 158 (VTPTQTEKPVQKETVQS) are compositionally biased toward polar residues. Basic and acidic residues predominate over residues 166-186 (SEEKKVEKPIITEKKEVKAES). Low complexity predominate over residues 197–208 (TDPTTAEETITT). A compositionally biased stretch (polar residues) spans 209-229 (QYQKLSGTTLTGQTIDLSQFN). Positions 240–257 (ITPNKPGTPGVGNNNNAN) are enriched in low complexity. Basic residues predominate over residues 343-352 (GKSKAAKYRR). The segment covering 353 to 371 (DKRETHRQKSDDEQRALDE) has biased composition (basic and acidic residues). The 169-residue stretch at 454–622 (TRAPIVTVMG…KVLLEAEILD (169 aa)) folds into the tr-type G domain. The tract at residues 463-470 (GHVDHGKT) is G1. Position 463–470 (463–470 (GHVDHGKT)) interacts with GTP. Residues 488–492 (GITQH) form a G2 region. The tract at residues 510–513 (DTPG) is G3. GTP contacts are provided by residues 510–514 (DTPGH) and 564–567 (NKVD). Residues 564-567 (NKVD) form a G4 region. The G5 stretch occupies residues 600–602 (SAK).

This sequence belongs to the TRAFAC class translation factor GTPase superfamily. Classic translation factor GTPase family. IF-2 subfamily.

The protein localises to the cytoplasm. In terms of biological role, one of the essential components for the initiation of protein synthesis. Protects formylmethionyl-tRNA from spontaneous hydrolysis and promotes its binding to the 30S ribosomal subunits. Also involved in the hydrolysis of GTP during the formation of the 70S ribosomal complex. This Flavobacterium johnsoniae (strain ATCC 17061 / DSM 2064 / JCM 8514 / BCRC 14874 / CCUG 350202 / NBRC 14942 / NCIMB 11054 / UW101) (Cytophaga johnsonae) protein is Translation initiation factor IF-2.